We begin with the raw amino-acid sequence, 80 residues long: Protein Vpu (80 aa).

The Extracellular portion of the chain corresponds to 1–6 (MQSLIA). The helical transmembrane segment at 7 to 27 (AIVALVVVAIIAIVVWSIVFI) threads the bilayer. Topologically, residues 28 to 80 (EYRKILRQRKIDRLIDRIRERAEDSGNESEGDQEELSALVEMGHDAPWDIDDL) are cytoplasmic. The segment at 49–80 (AEDSGNESEGDQEELSALVEMGHDAPWDIDDL) is disordered. Phosphoserine; by host CK2 is present on residues Ser52 and Ser56. Residues 52–62 (SGNESEGDQEE) show a composition bias toward acidic residues.

Belongs to the HIV-1 VPU protein family. Homopentamer. Interacts with host CD4 and BRTC; these interactions induce proteasomal degradation of CD4. Interacts with host BST2; this interaction leads to the degradation of host BST2. Interacts with host FBXW11. Interacts with host AP1M1; this interaction plays a role in the mistrafficking and subsequent degradation of host BST2. Interacts with host RANBP2; this interaction allows Vpu to down-regulate host BLM sumoylation. Post-translationally, phosphorylated by host CK2. This phosphorylation is necessary for interaction with human BTRC and degradation of CD4.

The protein resides in the host membrane. With respect to regulation, ion channel activity is inhibited by hexamethylene amiloride in vitro. In terms of biological role, enhances virion budding by targeting host CD4 and Tetherin/BST2 to proteasome degradation. Degradation of CD4 prevents any unwanted premature interactions between viral Env and its host receptor CD4 in the endoplasmic reticulum. Degradation of antiretroviral protein Tetherin/BST2 is important for virion budding, as BST2 tethers new viral particles to the host cell membrane. Mechanistically, Vpu bridges either CD4 or BST2 to BTRC, a substrate recognition subunit of the Skp1/Cullin/F-box protein E3 ubiquitin ligase, induces their ubiquitination and subsequent proteasomal degradation. The alteration of the E3 ligase specificity by Vpu seems to promote the degradation of host IKBKB, leading to NF-kappa-B down-regulation and subsequent apoptosis. Acts as a viroporin that forms an oligomeric ion channel in membranes. Modulates the host DNA repair mechanisms to promote degradation of nuclear viral cDNA in cells that are already productively infected in order to suppress immune sensing and proviral hyper-integration (superinfection). Manipulates PML-NBs and modulates SUMOylation of host BLM protein thereby enhancing its DNA-end processing activity toward viral unintegrated linear DNA. Also inhibits RAD52-mediated homologous repair of viral cDNA, preventing the generation of dead-end circular forms of single copies of the long terminal repeat and permitting sustained nucleolytic attack. In Human immunodeficiency virus type 1 group M subtype B (isolate JH32) (HIV-1), this protein is Protein Vpu.